Consider the following 205-residue polypeptide: Small ribosomal subunit protein uS4 (205 aa).

The interval 18 to 46 (NIWGRPKSPVNRREYGPGQHGQRRKGKLS) is disordered. The region spanning 94 to 157 (RRLDTVVYRA…KQLTFVLEAN (64 aa)) is the S4 RNA-binding domain.

It belongs to the universal ribosomal protein uS4 family. As to quaternary structure, part of the 30S ribosomal subunit. Contacts protein S5. The interaction surface between S4 and S5 is involved in control of translational fidelity.

Functionally, one of the primary rRNA binding proteins, it binds directly to 16S rRNA where it nucleates assembly of the body of the 30S subunit. With S5 and S12 plays an important role in translational accuracy. The polypeptide is Small ribosomal subunit protein uS4 (Rhodopseudomonas palustris (strain BisB18)).